Here is a 1161-residue protein sequence, read N- to C-terminus: Mitogen-activated protein kinase kinase kinase (1161 aa).

Residues 56–120 form the SH3 domain; it reads GDGSLWTALY…PKDFVTDEDP (65 aa). The 261-residue stretch at 142–402 folds into the Protein kinase domain; that stretch reads LDIKEVIGSG…KEILKQLESI (261 aa). ATP-binding positions include 148–156 and lysine 169; that span reads IGSGGFCKV. The active-site Proton acceptor is aspartate 264. Threonine 300 carries the post-translational modification Phosphothreonine; by autocatalysis. Position 304 is a phosphoserine; by autocatalysis (serine 304). 2 leucine-zipper regions span residues 426–447 and 461–482; these read IAGV…EEQL and LKIR…ELVM. Phosphoserine is present on residues serine 525 and serine 560. Disordered regions lie at residues 560 to 615 and 658 to 678; these read SQLS…GSGG and TTNN…NQLN. Residues 571 to 583 are compositionally biased toward polar residues; the sequence is AQTSTHSSFSKSA. Residues 591–601 show a composition bias toward low complexity; that stretch reads QQQNQQQVASL. 3 positions are modified to phosphoserine: serine 685, serine 773, and serine 792. The interval 790 to 830 is disordered; it reads GNSPAVGRKKHSLDSSSHHPPANGSNSFALPNQLTLPSEDN. A compositionally biased stretch (polar residues) spans 812–830; it reads NGSNSFALPNQLTLPSEDN. Threonine 862 is modified (phosphothreonine). Disordered stretches follow at residues 988-1014, 1045-1093, and 1137-1161; these read RSAS…EAVN, EQRQ…SAGS, and GGSS…LERC. Over residues 989-1010 the composition is skewed to low complexity; that stretch reads SASPSLSSSSTTASASPSIAST. Residue serine 993 is modified to Phosphoserine. Basic residues predominate over residues 1052 to 1063; sequence NQKKQRPKHITK. Residues 1073 to 1086 are compositionally biased toward basic and acidic residues; sequence GQHHEHDDHNDPQH. Residues 1150-1161 are compositionally biased toward polar residues; it reads PQTQSCEQLERC.

This sequence belongs to the protein kinase superfamily. STE Ser/Thr protein kinase family. MAP kinase kinase kinase subfamily. In terms of assembly, homodimer. Mg(2+) is required as a cofactor. Autophosphorylation on serine and threonine residues within the activation loop plays a role in enzyme activation. Expressed both maternally and zygotically. Expressed uniformly in large quantities in the early embryo (stages 1-4). In the late embryo, expression is ubiquitous, but expression levels are dramatically reduced. Expressed in the adult head and thorax, and in S2 cells.

The catalysed reaction is L-seryl-[protein] + ATP = O-phospho-L-seryl-[protein] + ADP + H(+). It carries out the reaction L-threonyl-[protein] + ATP = O-phospho-L-threonyl-[protein] + ADP + H(+). With respect to regulation, homodimerization via the leucine zipper domains is required for autophosphorylation and subsequent activation. Activated by C6-ceramide. Its function is as follows. Activates the JUN N-terminal pathway during dorsal closure. This is Mitogen-activated protein kinase kinase kinase from Drosophila melanogaster (Fruit fly).